The chain runs to 171 residues: MSNIGRNVSGDLKEKLISVNRVSKTVKGGRIFSFSALTVVGDGHGKVGFGYGKAREVPSAIQKAMEKARRNMIQVPLNNGTLQYSVTGSYTGSYIFMKPASNGTGIIAGGAMRSVLEVAGVHNVLAKTYGSTNPINVVRATMLVLESMKSPEMIALKRNKLVKEILENSYL.

One can recognise an S5 DRBM domain in the interval 12-75 (LKEKLISVNR…EKARRNMIQV (64 aa)).

It belongs to the universal ribosomal protein uS5 family. In terms of assembly, part of the 30S ribosomal subunit. Contacts proteins S4 and S8.

With S4 and S12 plays an important role in translational accuracy. Functionally, located at the back of the 30S subunit body where it stabilizes the conformation of the head with respect to the body. This chain is Small ribosomal subunit protein uS5, found in Buchnera aphidicola subsp. Baizongia pistaciae (strain Bp).